Reading from the N-terminus, the 232-residue chain is 6-phosphogluconolactonase (232 aa).

It belongs to the glucosamine/galactosamine-6-phosphate isomerase family. 6-phosphogluconolactonase subfamily.

The catalysed reaction is 6-phospho-D-glucono-1,5-lactone + H2O = 6-phospho-D-gluconate + H(+). The protein operates within carbohydrate degradation; pentose phosphate pathway; D-ribulose 5-phosphate from D-glucose 6-phosphate (oxidative stage): step 2/3. Its function is as follows. Hydrolysis of 6-phosphogluconolactone to 6-phosphogluconate. In Haemophilus influenzae (strain ATCC 51907 / DSM 11121 / KW20 / Rd), this protein is 6-phosphogluconolactonase (pgl).